An 834-amino-acid polypeptide reads, in one-letter code: Glycerol-3-phosphate acyltransferase (834 aa).

An HXXXXD motif motif is present at residues 309-314; sequence CHRSHI.

This sequence belongs to the GPAT/DAPAT family.

The protein localises to the cell inner membrane. It carries out the reaction sn-glycerol 3-phosphate + an acyl-CoA = a 1-acyl-sn-glycero-3-phosphate + CoA. The protein operates within phospholipid metabolism; CDP-diacylglycerol biosynthesis; CDP-diacylglycerol from sn-glycerol 3-phosphate: step 1/3. This chain is Glycerol-3-phosphate acyltransferase, found in Pseudomonas paraeruginosa (strain DSM 24068 / PA7) (Pseudomonas aeruginosa (strain PA7)).